The following is a 189-amino-acid chain: MNLFYNLSLKANTLLSAQSGGIKDELKDKFKTLFPTWPMFLATLIAFILVVLILWFLLHKPIKKAMKARQDYIQKNIDEAKLTNDISKQKLNEANKRLAEAYSEADELIKNAKIHGESVIDEYTHKAKNKSKRIIEKAHMEIESERQKMVDDSKSNIAKAAIEISKKIMQKEVTKESQDEVIKNFLKDK.

The helical transmembrane segment at 38–58 (PMFLATLIAFILVVLILWFLL) threads the bilayer.

Belongs to the ATPase B chain family. In terms of assembly, F-type ATPases have 2 components, F(1) - the catalytic core - and F(0) - the membrane proton channel. F(1) has five subunits: alpha(3), beta(3), gamma(1), delta(1), epsilon(1). F(0) has three main subunits: a(1), b(2) and c(10-14). The alpha and beta chains form an alternating ring which encloses part of the gamma chain. F(1) is attached to F(0) by a central stalk formed by the gamma and epsilon chains, while a peripheral stalk is formed by the delta and b chains.

The protein resides in the cell membrane. In terms of biological role, f(1)F(0) ATP synthase produces ATP from ADP in the presence of a proton or sodium gradient. F-type ATPases consist of two structural domains, F(1) containing the extramembraneous catalytic core and F(0) containing the membrane proton channel, linked together by a central stalk and a peripheral stalk. During catalysis, ATP synthesis in the catalytic domain of F(1) is coupled via a rotary mechanism of the central stalk subunits to proton translocation. Functionally, component of the F(0) channel, it forms part of the peripheral stalk, linking F(1) to F(0). This chain is ATP synthase subunit b, found in Mycoplasmopsis agalactiae (strain NCTC 10123 / CIP 59.7 / PG2) (Mycoplasma agalactiae).